A 149-amino-acid polypeptide reads, in one-letter code: Inner membrane protein YdcZ (149 aa).

Residues 1-4 are Periplasmic-facing; the sequence is MNQS. A helical membrane pass occupies residues 5 to 25; sequence LTLAFLIAAGIGLVVQNTLMV. Over 26–33 the chain is Cytoplasmic; it reads RITQTSST. A helical membrane pass occupies residues 34-54; the sequence is ILIAMLLNSLVGIVLFVSILW. Topologically, residues 55-70 are periplasmic; sequence FKQGMAGFGELVSSVR. Residues 71-91 form a helical membrane-spanning segment; that stretch reads WWTLIPGLLGSFFVFASISGY. The Cytoplasmic portion of the chain corresponds to 92–93; the sequence is QN. Residues 94–114 traverse the membrane as a helical segment; the sequence is VGAATTIAVLVASQLIGGLML. Over 115–123 the chain is Periplasmic; it reads DIFRSHGVP. A helical transmembrane segment spans residues 124–144; that stretch reads LRALFGPICGAILLVVGAWLV. At 145 to 149 the chain is on the cytoplasmic side; it reads ARRSF.

Its subcellular location is the cell inner membrane. In Escherichia coli (strain K12), this protein is Inner membrane protein YdcZ (ydcZ).